The chain runs to 346 residues: S-adenosylmethionine:tRNA ribosyltransferase-isomerase (346 aa).

Belongs to the QueA family. In terms of assembly, monomer.

Its subcellular location is the cytoplasm. It carries out the reaction 7-aminomethyl-7-carbaguanosine(34) in tRNA + S-adenosyl-L-methionine = epoxyqueuosine(34) in tRNA + adenine + L-methionine + 2 H(+). Its pathway is tRNA modification; tRNA-queuosine biosynthesis. Its function is as follows. Transfers and isomerizes the ribose moiety from AdoMet to the 7-aminomethyl group of 7-deazaguanine (preQ1-tRNA) to give epoxyqueuosine (oQ-tRNA). The protein is S-adenosylmethionine:tRNA ribosyltransferase-isomerase of Shewanella denitrificans (strain OS217 / ATCC BAA-1090 / DSM 15013).